The following is a 645-amino-acid chain: MLPASLQRKAAAVGGRGPTNQSRVAVRVSAQPKEAPPASTPIVEDPESKFRRYGKHFGGIHKLSMDWLDSVPRVRVRTKDSRQLDDMLELAVLNERLAGRLEPWQARQKLEYLRKRRKNWERIFEYVTRQDAAATLAMIEEANRKVEESLSEEAREKTAVGDLRDQLESLRAQVAQAQERLAMTQSRVEQNLQRVNELKAEATTLERMRKASDLDIKERERIAISTVAAKGPASSSSSAAAVSAPATSATLTVERPAATTVTQEVPSTSYGTPVDRAPRRSKAAIRRSRGLESSMEIEEGLRNFWYPAEFSARLPKDTLVPFELFGEPWVMFRDEKGQPSCIRDECAHRGCPLSLGKVVEGQVMCPYHGWEFNGDGACTKMPSTPFCRNVGVAALPCAEKDGFIWVWPGDGLPAETLPDFAQPPEGFLIHAEIMVDVPVEHGLLIENLLDLAHAPFTHTSTFARGWPVPDFVKFHANKALSGFWDPYPIDMAFQPPCMTLSTIGLAQPGKIMRGVTASQCKNHLHQLHVCMPSKKGHTRLLYRMSLDFLPWMRHVPFIDRIWKQVAAQVLGEDLVLVLGQQDRMLRGGSNWSNPAPYDKLAVRYRRWRNGVNAEVARVRAGEPPSNPVAMSAGEMFSVDEDDMDN.

Residues 1–46 (MLPASLQRKAAAVGGRGPTNQSRVAVRVSAQPKEAPPASTPIVEDP) are disordered. A coiled-coil region spans residues 105–218 (QARQKLEYLR…RKASDLDIKE (114 aa)). The tract at residues 258 to 287 (ATTVTQEVPSTSYGTPVDRAPRRSKAAIRR) is disordered. The span at 259–271 (TTVTQEVPSTSYG) shows a compositional bias: polar residues. Residues 305 to 406 (WYPAEFSARL…CAEKDGFIWV (102 aa)) form the Rieske domain. [2Fe-2S] cluster is bound by residues C346, H348, C365, and H368. The Fe cation site is built by E446, D450, H453, and H458.

It localises to the plastid. Its subcellular location is the chloroplast inner membrane. The protein resides in the chloroplast thylakoid membrane. The enzyme catalyses chlorophyllide a + 2 NADPH + 2 O2 + 2 H(+) = chlorophyllide b + 2 NADP(+) + 3 H2O. Its function is as follows. Catalyzes a two-step oxygenase reaction involved in the synthesis of chlorophyll b. Acts specifically on the non-esterified chlorophyllide a and not on chlorophyll a. This chain is Chlorophyllide a oxygenase, chloroplastic (CAO), found in Chlamydomonas reinhardtii (Chlamydomonas smithii).